A 338-amino-acid chain; its full sequence is MLSALARPASAVLRRSFSTSAQNNAKVAVLGASGGIGQPLSLLLKNSPLVSRLTLYDIAHTPGVAADLSHIETKATVKGYLGPEQLPDCLKGCDVVVIPAGVPRKPGMTRDDLFNTNATIVATLTSACAQHCPEAMICVIANPVNSTIPITAEVFKKHGVYNPNKIFGVTTLDIVRANTFVAELKGLDPARVNVPVIGGHAGKTIIPLISQCTPKVDFPQDQLTALTGRIQEAGTEVVKAKAGAGSATLSMAYAGARFVFSLVDAMNGKEGVVECSFVKSQETECTYFSTPLLLGKKGIEKNLGIGKVSSFEEKMISDAIPELKASIKKGEDFVKTLK.

The N-terminal 24 residues, 1 to 24, are a transit peptide targeting the mitochondrion; it reads MLSALARPASAVLRRSFSTSAQNN. NAD(+) contacts are provided by residues 31-37 and D57; that span reads GASGGIG. The O-linked (GlcNAc) serine glycan is linked to S33. N6-acetyllysine; alternate occurs at positions 78 and 91. N6-succinyllysine; alternate occurs at positions 78 and 91. Substrate is bound by residues R104 and R110. NAD(+)-binding positions include N117 and 140–142; that span reads IAN. N142 is a binding site for substrate. Residue K165 is modified to N6-acetyllysine. R176 serves as a coordination point for substrate. K185 is subject to N6-acetyllysine; alternate. At K185 the chain carries N6-succinyllysine; alternate. H200 acts as the Proton acceptor in catalysis. K203 carries the N6-succinyllysine modification. N6-acetyllysine; alternate occurs at positions 215 and 239. An N6-succinyllysine; alternate mark is found at K215 and K239. An N6-malonyllysine; alternate modification is found at K239. Position 246 is a phosphoserine (S246). M251 contributes to the NAD(+) binding site. Position 269 is an N6-succinyllysine (K269). N6-acetyllysine; alternate occurs at positions 296, 301, 307, 314, and 324. An N6-succinyllysine; alternate mark is found at K296, K301, K307, K314, and K324. Position 307 is an N6-malonyllysine; alternate (K307). At S326 the chain carries Phosphoserine. N6-acetyllysine; alternate occurs at positions 328, 329, and 335. K328 is modified (N6-succinyllysine; alternate). K329 is modified (N6-malonyllysine; alternate). K335 carries the post-translational modification N6-succinyllysine; alternate.

This sequence belongs to the LDH/MDH superfamily. MDH type 1 family. Homodimer. Post-translationally, acetylation is enhanced after treatment either with trichostin A (TCA) or with nicotinamide (NAM) with the appearance of tri- and tetraacetylations. Glucose also increases acetylation.

The protein resides in the mitochondrion matrix. The enzyme catalyses (S)-malate + NAD(+) = oxaloacetate + NADH + H(+). Enzyme activity is enhanced by acetylation. In Pongo abelii (Sumatran orangutan), this protein is Malate dehydrogenase, mitochondrial (MDH2).